A 416-amino-acid chain; its full sequence is Phosphatidylinositol 5-phosphate 4-kinase type-2 beta (416 aa).

Ser-2 is subject to N-acetylserine. Thr-8 carries the phosphothreonine modification. Phosphoserine is present on Ser-19. A PIPK domain is found at Ala-38–Leu-415. Residues Val-64–Asp-70 form a required for interaction with PIP5K1A region. Residues Lys-94 and Lys-150 each carry the N6-acetyllysine modification. ATP contacts are provided by residues Arg-202–Val-204 and Lys-214. Residues Asn-203–Val-204 and Lys-214 contribute to the GTP site. Thr-322 carries the post-translational modification Phosphothreonine. Ser-326 bears the Phosphoserine mark. Asp-369 contributes to the GTP binding site.

Homodimer. Binds TNFRSF1A. Interacts with PIP4K2A; the interaction suppresses ubiquitination by the SPOP/CUL3 complex. Probably interacts with PIP5K1A; the interaction inhibits PIP5K1A kinase activity. Ubiquitinated by the SPOP/CUL3 complex. Ubiquitination is stimulated by PtdIns5P levels. Post-translationally, phosphorylated on serine residues.

The protein resides in the endoplasmic reticulum membrane. Its subcellular location is the cell membrane. It is found in the nucleus. The protein localises to the cytoplasm. The catalysed reaction is a 1,2-diacyl-sn-glycero-3-phospho-(1D-myo-inositol-5-phosphate) + ATP = a 1,2-diacyl-sn-glycero-3-phospho-(1D-myo-inositol-4,5-bisphosphate) + ADP + H(+). It catalyses the reaction 1,2-dihexadecanoyl-sn-glycero-3-phospho-(1D-myo-inositol-5-phosphate) + ATP = 1,2-dihexadecanoyl-sn-glycero-3-phospho-(1D-myo-inositol-4,5-bisphosphate) + ADP + H(+). It carries out the reaction 1,2-dihexadecanoyl-sn-glycero-3-phospho-(1D-myo-inositol-5-phosphate) + GTP = 1,2-dihexadecanoyl-sn-glycero-3-phospho-(1D-myo-inositol-4,5-bisphosphate) + GDP + H(+). Participates in the biosynthesis of phosphatidylinositol 4,5-bisphosphate. Preferentially utilizes GTP, rather than ATP, for PI(5)P phosphorylation and its activity reflects changes in direct proportion to the physiological GTP concentration. Its GTP-sensing activity is critical for metabolic adaptation. PIP4Ks negatively regulate insulin signaling through a catalytic-independent mechanism. They interact with PIP5Ks and suppress PIP5K-mediated PtdIns(4,5)P2 synthesis and insulin-dependent conversion to PtdIns(3,4,5)P3. This is Phosphatidylinositol 5-phosphate 4-kinase type-2 beta from Rattus norvegicus (Rat).